A 422-amino-acid chain; its full sequence is Serine/threonine-protein kinase H1 homolog (422 aa).

A disordered region spans residues 35-80 (FIKYDGGGEKTGSPSPQGQSQAVAKVSQSPPPANDQPEPADSHRKK). The span at 46–62 (GSPSPQGQSQAVAKVSQ) shows a compositional bias: polar residues. One can recognise a Protein kinase domain in the interval 96-353 (YDIKALIGRG…AGQALKHPWI (258 aa)). Residues 102 to 110 (IGRGSFSRV) and Lys125 contribute to the ATP site. Asp216 functions as the Proton acceptor in the catalytic mechanism. The interval 376-422 (RASSRCHSTKSSQSTRSSRSTKSSKARRLREKELRELNRRYQQQCNG) is disordered. A compositionally biased stretch (low complexity) spans 384 to 396 (TKSSQSTRSSRST). Residues 405 to 414 (REKELRELNR) are compositionally biased toward basic and acidic residues.

The protein belongs to the protein kinase superfamily. CAMK Ser/Thr protein kinase family.

It carries out the reaction L-seryl-[protein] + ATP = O-phospho-L-seryl-[protein] + ADP + H(+). It catalyses the reaction L-threonyl-[protein] + ATP = O-phospho-L-threonyl-[protein] + ADP + H(+). The polypeptide is Serine/threonine-protein kinase H1 homolog (pskh1) (Danio rerio (Zebrafish)).